The chain runs to 554 residues: Acurin A biosynthesis cluster MFS-type transporter (554 aa).

The next 5 membrane-spanning stretches (helical) occupy residues 24-44, 60-80, 96-116, 123-143, and 151-171; these read WLIF…TSII, LYIW…AIVG, LLIF…GMLL, GLGG…MVSL, and GILG…GGGF. N-linked (GlcNAc...) asparagine glycosylation is present at Asn174. 3 helical membrane-spanning segments follow: residues 179-199, 219-239, and 251-271; these read WIFY…VTLL, WGGI…LTWA, and IVPL…EALP. N-linked (GlcNAc...) asparagine glycosylation occurs at Asn283. 6 helical membrane-spanning segments follow: residues 289–309, 324–344, 352–372, 385–405, 417–437, and 496–516; these read LFVM…FLPI, VMLF…GILM, SFQY…TLLD, ILFG…ILAS, TWIF…AAVF, and VWQV…LVKA.

The protein belongs to the major facilitator superfamily.

Its subcellular location is the membrane. Its function is as follows. MFS-type transporter that may have a role in the biosynthesis of acurin A, a highly reduced polyketide coupled to a serine via a peptide bond; either in extra- or intracellular transport. This is Acurin A biosynthesis cluster MFS-type transporter from Aspergillus aculeatus (strain ATCC 16872 / CBS 172.66 / WB 5094).